A 313-amino-acid polypeptide reads, in one-letter code: Ornithine carbamoyltransferase (313 aa).

Residues 57–60, Gln-84, Arg-108, and 135–138 contribute to the carbamoyl phosphate site; these read STRT and HPCQ. L-ornithine contacts are provided by residues Asn-166, Asp-230, and 234-235; that span reads SM. Carbamoyl phosphate contacts are provided by residues 270-271 and Arg-298; that span reads CL.

It belongs to the aspartate/ornithine carbamoyltransferase superfamily. OTCase family. Homohexamer.

It localises to the cytoplasm. It catalyses the reaction carbamoyl phosphate + L-ornithine = L-citrulline + phosphate + H(+). The protein operates within amino-acid biosynthesis; L-arginine biosynthesis; L-arginine from L-ornithine and carbamoyl phosphate: step 1/3. In terms of biological role, reversibly catalyzes the transfer of the carbamoyl group from carbamoyl phosphate (CP) to the N(epsilon) atom of ornithine (ORN) to produce L-citrulline. This is Ornithine carbamoyltransferase from Gloeobacter violaceus (strain ATCC 29082 / PCC 7421).